Reading from the N-terminus, the 725-residue chain is Catalase-peroxidase (725 aa).

Polar residues-rich tracts occupy residues 1–12 (MSTSNDPSNNAS) and 23–32 (PKQSAGSGTA). An N-terminal signal peptide occupies residues 1 to 20 (MSTSNDPSNNASAGKCPFHA). The interval 1-35 (MSTSNDPSNNASAGKCPFHAETPKQSAGSGTANRD) is disordered. Residues 105-226 (WHGAGTYRTV…IGATEMGLIY (122 aa)) constitute a cross-link (tryptophyl-tyrosyl-methioninium (Trp-Tyr) (with M-252)). Residue histidine 106 is the Proton acceptor of the active site. Residues 226–252 (YVNPEGPNASGEPLSAAAAIRATFGNM) constitute a cross-link (tryptophyl-tyrosyl-methioninium (Tyr-Met) (with W-105)). Histidine 267 is a binding site for heme b.

This sequence belongs to the peroxidase family. Peroxidase/catalase subfamily. In terms of assembly, homodimer or homotetramer. Heme b serves as cofactor. Formation of the three residue Trp-Tyr-Met cross-link is important for the catalase, but not the peroxidase activity of the enzyme.

The enzyme catalyses H2O2 + AH2 = A + 2 H2O. It carries out the reaction 2 H2O2 = O2 + 2 H2O. Functionally, bifunctional enzyme with both catalase and broad-spectrum peroxidase activity. The protein is Catalase-peroxidase of Klebsiella pneumoniae subsp. pneumoniae (strain ATCC 700721 / MGH 78578).